A 382-amino-acid chain; its full sequence is 6-oxocyclohex-1-ene-1-carbonyl-CoA hydrolase (382 aa).

It belongs to the enoyl-CoA hydratase/isomerase family. In terms of assembly, homohexamer.

The enzyme catalyses 6-oxocyclohex-1-ene-1-carbonyl-CoA + 2 H2O = 3-hydroxy-6-carboxyhexanoyl-CoA + H(+). The protein operates within aromatic compound metabolism; benzoyl-CoA degradation. Functionally, involved in the central benzoyl-CoA catabolism. Catalyzes the addition of one molecule of water to the double bond and the hydrolytic cleavage of C-C bond in the alicyclic ring, 6-oxocyclohex-1-ene-1-carbonyl-CoA (6-OCH-CoA) to yield 3-hydroxypimelyl-CoA. The polypeptide is 6-oxocyclohex-1-ene-1-carbonyl-CoA hydrolase (Syntrophus aciditrophicus (strain SB)).